Reading from the N-terminus, the 412-residue chain is Mannose-6-phosphate isomerase (412 aa).

Residues Q99, H101, E126, and H265 each coordinate Zn(2+). Residue R284 is part of the active site.

It belongs to the mannose-6-phosphate isomerase type 1 family. Zn(2+) is required as a cofactor.

It localises to the cytoplasm. It is found in the nucleus. It catalyses the reaction D-mannose 6-phosphate = D-fructose 6-phosphate. The protein operates within nucleotide-sugar biosynthesis; GDP-alpha-D-mannose biosynthesis; alpha-D-mannose 1-phosphate from D-fructose 6-phosphate: step 1/2. Functionally, involved in the synthesis of the GDP-mannose and dolichol-phosphate-mannose required for a number of critical mannosyl transfer reactions. This is Mannose-6-phosphate isomerase (pmi40) from Schizosaccharomyces pombe (strain 972 / ATCC 24843) (Fission yeast).